The primary structure comprises 311 residues: MRLPTRHLLGIEGLHPRDISALLDLAESYVLLNRSGKTRRDVLRGRTLINLFFEDSTRTRTSFELAGKRLGADVINMSVSTSSVSKGETLLDTAATLNAMNCDLLVVRHKASGAPALLAQKVDAAVINAGDGMHEHPTQALLDALTIRRNKGTLAGLTVAICGDIAHSRVARSNLLLLTAMGSRVRVVGPPTLIPSGIDQFGATVFHDMREGLRDADIVMALRLQTERMSAGLIPSAREFFTFYGLDAAKLAMAKPDALVMHPGPMNRGVEIDSQVADDATRSVIREQVEMGVAIRMAVLDVLARTALAHA.

Arg-58 and Thr-59 together coordinate carbamoyl phosphate. An L-aspartate-binding site is contributed by Lys-86. Positions 108, 136, and 139 each coordinate carbamoyl phosphate. Residues Arg-169 and Arg-223 each contribute to the L-aspartate site. Carbamoyl phosphate is bound by residues Gly-264 and Pro-265.

This sequence belongs to the aspartate/ornithine carbamoyltransferase superfamily. ATCase family. In terms of assembly, heterododecamer (2C3:3R2) of six catalytic PyrB chains organized as two trimers (C3), and six regulatory PyrI chains organized as three dimers (R2).

The catalysed reaction is carbamoyl phosphate + L-aspartate = N-carbamoyl-L-aspartate + phosphate + H(+). The protein operates within pyrimidine metabolism; UMP biosynthesis via de novo pathway; (S)-dihydroorotate from bicarbonate: step 2/3. Its function is as follows. Catalyzes the condensation of carbamoyl phosphate and aspartate to form carbamoyl aspartate and inorganic phosphate, the committed step in the de novo pyrimidine nucleotide biosynthesis pathway. The chain is Aspartate carbamoyltransferase catalytic subunit from Acidiphilium cryptum (strain JF-5).